Reading from the N-terminus, the 211-residue chain is Thiamine-phosphate synthase (211 aa).

Residues 37-41 and N69 contribute to the 4-amino-2-methyl-5-(diphosphooxymethyl)pyrimidine site; that span reads QYRDK. 2 residues coordinate Mg(2+): D70 and D89. S108 is a binding site for 4-amino-2-methyl-5-(diphosphooxymethyl)pyrimidine. 135–137 lines the 2-[(2R,5Z)-2-carboxy-4-methylthiazol-5(2H)-ylidene]ethyl phosphate pocket; sequence SPT. Residue K138 participates in 4-amino-2-methyl-5-(diphosphooxymethyl)pyrimidine binding. Residues G165 and 185-186 contribute to the 2-[(2R,5Z)-2-carboxy-4-methylthiazol-5(2H)-ylidene]ethyl phosphate site; that span reads LS.

Belongs to the thiamine-phosphate synthase family. Requires Mg(2+) as cofactor.

It catalyses the reaction 2-[(2R,5Z)-2-carboxy-4-methylthiazol-5(2H)-ylidene]ethyl phosphate + 4-amino-2-methyl-5-(diphosphooxymethyl)pyrimidine + 2 H(+) = thiamine phosphate + CO2 + diphosphate. The enzyme catalyses 2-(2-carboxy-4-methylthiazol-5-yl)ethyl phosphate + 4-amino-2-methyl-5-(diphosphooxymethyl)pyrimidine + 2 H(+) = thiamine phosphate + CO2 + diphosphate. The catalysed reaction is 4-methyl-5-(2-phosphooxyethyl)-thiazole + 4-amino-2-methyl-5-(diphosphooxymethyl)pyrimidine + H(+) = thiamine phosphate + diphosphate. Its pathway is cofactor biosynthesis; thiamine diphosphate biosynthesis; thiamine phosphate from 4-amino-2-methyl-5-diphosphomethylpyrimidine and 4-methyl-5-(2-phosphoethyl)-thiazole: step 1/1. Its function is as follows. Condenses 4-methyl-5-(beta-hydroxyethyl)thiazole monophosphate (THZ-P) and 2-methyl-4-amino-5-hydroxymethyl pyrimidine pyrophosphate (HMP-PP) to form thiamine monophosphate (TMP). The sequence is that of Thiamine-phosphate synthase from Thiobacillus denitrificans (strain ATCC 25259 / T1).